A 416-amino-acid chain; its full sequence is cAMP-dependent protein kinase regulatory subunit (416 aa).

A dimerization and phosphorylation region spans residues 2–183 (VSSLPKESQA…RLEKSIRNNF (182 aa)). Phosphoserine occurs at positions 3, 4, 9, 68, 70, 74, 77, 79, 81, 83, and 84. The tract at residues 8-45 (ESQAELQLFQNEINAANPSDFLQFSANYFNKRLEQQRA) is dimerization/docking domain (D/D). The tract at residues 65 to 138 (PEESFSRPQS…TSTPPLPMHF (74 aa)) is disordered. A compositionally biased stretch (low complexity) spans 70 to 84 (SRPQSAQSQSRSRSS). Position 129 is a phosphothreonine (T129). A Phosphoserine modification is found at S130. Phosphothreonine occurs at positions 131 and 144. The Inhibitor sequence (IS) signature appears at 142-146 (RRTSV). Phosphoserine; by autocatalysis is present on S145. Position 147 is a phosphoserine (S147). 2 positions are modified to phosphothreonine: T150 and T160. 3',5'-cyclic AMP is bound by residues 184–301 (LFNK…KSMP), E249, R258, 302–416 (VLKS…PTRH), E368, and R377.

It belongs to the cAMP-dependent kinase regulatory chain family. As to quaternary structure, the inactive holoenzyme of cAMP-dependent protein kinase is a tetramer, composed of 2 regulatory subunits (R, encoded by BCY1) and two catalytic subunits (C, encoded by the 3 partially redundant TPK1, TPK2, and TPK3 genes). Activation by cAMP causes dissociation of the holoenzyme, producing 2 active catalytic monomers C and a regulatory dimer R(2). Post-translationally, phosphorylated by YAK1 in response to glucose starvation. Phosphorylated by MCK1 at Thr-129 upon TOR complex 1 (TORC1) inhibition. Thr-129 phosphorylation activates BCY1 to inhibit PKA. TORC1 inhibits phosphorylation of RxxS/T sites but has no effect on Ser-145 phosphorylation. The phosphorylation sites can be clustered in several groups, all localized in the N-terminal part. The first cluster termed cluster I (CI) is located close to the N-terminus and includes Ser-3, Ser-4 and Ser-9. The second includes Ser-68, Ser-70, Ser-74, Ser-77, Ser-79, Ser-81, Ser-83, and Ser-84. This cluster of phosphorylation sites, termed cluster II (CII), is important for BCY1 cytoplasmic localization and function. The third cluster of phosphorylated residues consists of Thr-144, Ser-145, Ser-147, Thr-150, and Thr-160. This cluster falls within or near the so-called autoinhibitory domain where the catalytic subunit of PKA autophosphorylates the highly conserved Ser-145 to inhibit BCY1. A last cluster of phosphorylated residues included Thr-129, Ser-130, and Thr-131 and is termed cluster III (CIII). Sites in CIII (and to a lesser extent in CII) are hyperphosphorylated in response to rapamycin.

The protein localises to the cytoplasm. Its subcellular location is the nucleus. Functionally, regulatory subunit of the cyclic AMP-dependent protein kinase (PKA), an effector of the Ras/cAMP pathway. Inhibits PKA activity in the absence of cAMP. cAMP activates PKA and promotes growth and proliferation in response to good nutrient conditions. Together with ZDS1, provides a negative feedback control on the cell wall integrity-signaling pathway by acting as a negative regulator of MAP kinase SLT2/MPK1. The polypeptide is cAMP-dependent protein kinase regulatory subunit (BCY1) (Saccharomyces cerevisiae (strain ATCC 204508 / S288c) (Baker's yeast)).